The sequence spans 184 residues: Ribosome-recycling factor (184 aa).

A disordered region spans residues Asp-137–Glu-158.

Belongs to the RRF family.

The protein localises to the cytoplasm. In terms of biological role, responsible for the release of ribosomes from messenger RNA at the termination of protein biosynthesis. May increase the efficiency of translation by recycling ribosomes from one round of translation to another. This Desulforamulus reducens (strain ATCC BAA-1160 / DSM 100696 / MI-1) (Desulfotomaculum reducens) protein is Ribosome-recycling factor.